Here is a 750-residue protein sequence, read N- to C-terminus: NAD(P)H-quinone oxidoreductase subunit 5, chloroplastic (750 aa).

16 helical membrane-spanning segments follow: residues 9 to 29, 39 to 59, 89 to 109, 125 to 145, 147 to 167, 185 to 205, 219 to 239, 267 to 287, 290 to 310, 327 to 347, 354 to 374, 396 to 416, 427 to 447, 554 to 574, 606 to 626, and 728 to 748; these read WIIP…LLLF, IWAF…LDLS, IDSL…LVLI, FAYM…SNLI, IYFF…FWFT, GDFG…SLEF, NEMN…GSVA, ATMV…FVLL, IMNT…TLAI, LGYM…FHLI, ALLF…VGYS, FFFL…CFWS, YSPI…FYMF, FSML…ISFS, FFTN…IASF, and ILLY…FVFI.

This sequence belongs to the complex I subunit 5 family. NDH is composed of at least 16 different subunits, 5 of which are encoded in the nucleus.

The protein resides in the plastid. It localises to the chloroplast thylakoid membrane. It catalyses the reaction a plastoquinone + NADH + (n+1) H(+)(in) = a plastoquinol + NAD(+) + n H(+)(out). The enzyme catalyses a plastoquinone + NADPH + (n+1) H(+)(in) = a plastoquinol + NADP(+) + n H(+)(out). NDH shuttles electrons from NAD(P)H:plastoquinone, via FMN and iron-sulfur (Fe-S) centers, to quinones in the photosynthetic chain and possibly in a chloroplast respiratory chain. The immediate electron acceptor for the enzyme in this species is believed to be plastoquinone. Couples the redox reaction to proton translocation, and thus conserves the redox energy in a proton gradient. The polypeptide is NAD(P)H-quinone oxidoreductase subunit 5, chloroplastic (ndhF) (Phaseolus vulgaris (Kidney bean)).